The primary structure comprises 384 residues: Lipid-A-disaccharide synthase 1 (384 aa).

The protein belongs to the LpxB family.

It carries out the reaction a lipid X + a UDP-2-N,3-O-bis[(3R)-3-hydroxyacyl]-alpha-D-glucosamine = a lipid A disaccharide + UDP + H(+). The protein operates within bacterial outer membrane biogenesis; LPS lipid A biosynthesis. Condensation of UDP-2,3-diacylglucosamine and 2,3-diacylglucosamine-1-phosphate to form lipid A disaccharide, a precursor of lipid A, a phosphorylated glycolipid that anchors the lipopolysaccharide to the outer membrane of the cell. This chain is Lipid-A-disaccharide synthase 1, found in Legionella pneumophila (strain Paris).